The primary structure comprises 285 residues: Golgi to ER traffic protein 2 (285 aa).

The segment covering 1-10 (MSELTEAEKR) has biased composition (basic and acidic residues). Disordered stretches follow at residues 1-72 (MSEL…KEDS) and 87-106 (MQGQ…PDLL). Residue S2 is modified to N-acetylserine. Over 2–148 (SELTEAEKRR…LDYHDYLLNR (147 aa)) the chain is Cytoplasmic. Basic residues predominate over residues 11-20 (RLLRERRQKK). The span at 24–42 (GGASSRLNKITGQASSHLN) shows a compositional bias: polar residues. At S45 the chain carries Phosphoserine. Over residues 49–60 (APSAAKTTPPAS) the composition is skewed to low complexity. Over residues 93-104 (GKSTPQDSSTPD) the composition is skewed to polar residues. Residues 149 to 169 (LKAWTILVKWVFFLLPYLYLI) form a helical membrane-spanning segment. Over 170-196 (TRPNSSVWPAYAFTQSAWFAPLRNPSN) the chain is Lumenal. N173 and N196 each carry an N-linked (GlcNAc...) asparagine glycan. A helical membrane pass occupies residues 197 to 216 (FTRIFATFEFLSISIYYQLL). The Cytoplasmic portion of the chain corresponds to 217 to 263 (KNVEHKSKIKNLQDTNKLVKLVSLVPEGVIPVANLKGKLITLLQYWD). The chain crosses the membrane as a helical span at residues 264–284 (LLSMLITDISFVLIVLGLLTY). A topological domain (lumenal) is located at residue L285.

It belongs to the GET2 family. As to quaternary structure, component of the Golgi to ER traffic (GET) complex, which is composed of GET1, GET2 and GET3. Within the complex, GET1 and GET2 form a heterotetramer which is stabilized by phosphatidylinositol binding and which binds to the GET3 homodimer.

The protein localises to the endoplasmic reticulum membrane. The protein resides in the golgi apparatus membrane. Required for the post-translational delivery of tail-anchored (TA) proteins to the endoplasmic reticulum. Together with GET1, acts as a membrane receptor for soluble GET3, which recognizes and selectively binds the transmembrane domain of TA proteins in the cytosol. The GET complex cooperates with the HDEL receptor ERD2 to mediate the ATP-dependent retrieval of resident ER proteins that contain a C-terminal H-D-E-L retention signal from the Golgi to the ER. Involved in DNA replication and DNA damage response and also in cell wall function. The polypeptide is Golgi to ER traffic protein 2 (Saccharomyces cerevisiae (strain RM11-1a) (Baker's yeast)).